The primary structure comprises 588 residues: Snake venom 5'-nucleotidase (588 aa).

A signal peptide spans Met1–Gly40. Zn(2+) contacts are provided by Asp51 and His53. Residues Cys66 and Cys71 are joined by a disulfide bond. A glycan (N-linked (GlcNAc...) asparagine) is linked at Asn88. Zn(2+) is bound by residues Asp99 and Asn131. Asn167 carries an N-linked (GlcNAc...) asparagine glycan. The Zn(2+) site is built by His234 and His257. 3 N-linked (GlcNAc...) asparagine glycosylation sites follow: Asn327, Asn347, and Asn361. 2 cysteine pairs are disulfide-bonded: Cys367/Cys372 and Cys379/Cys401. Arg368 lines the AMP pocket. The AMP site is built by Asn404 and Arg409. An N-linked (GlcNAc...) asparagine glycan is attached at Asn418. Phe432 is a binding site for AMP. A disulfide bond links Cys491 and Cys494. Residues Phe515 and Asp521 each coordinate AMP. A glycan (N-linked (GlcNAc...) asparagine) is linked at Asn532. Residue Ser564 is the site of GPI-anchor amidated serine attachment. A propeptide spans Ala565–Leu588 (removed in mature form).

It belongs to the 5'-nucleotidase family. Zn(2+) is required as a cofactor. Venom 5'-nucleotidases (or a part thereof) may be released into the venom via exosome-like vesicles. They may be attached via a GPI anchor to the membrane of these vesicles. Soluble forms of 5'-nucleotidase might be released by cleavage of the ectodomain in the exosome-like vesicles or venom gland cells. Expressed by the venom gland.

The protein resides in the membrane. The enzyme catalyses a ribonucleoside 5'-phosphate + H2O = a ribonucleoside + phosphate. In terms of biological role, hydrolyzes nucleotides into nucleosides. Snake venom 5'-nucleotidases are widely distributed among venomous snake taxa, but there is a lack of information about their biological activities. They have been shown to inhibit platelet aggregation. This effect may be due to the liberation of inhibitory AMP or adenosine by its action on ADP released upon initiation of aggregation. Venom 5'-nucleotidases are also known to synergistically act in vivo with other toxins like ADPases, phospholipases, and disintegrins to exert a more pronounced anti-coagulant effect. The sequence is that of Snake venom 5'-nucleotidase from Gloydius brevicauda (Korean slamosa snake).